The sequence spans 147 residues: Large ribosomal subunit protein uL15 (147 aa).

Residues 1-13 show a composition bias toward basic and acidic residues; it reads MELHSLKAAEGSR. The tract at residues 1 to 57 is disordered; sequence MELHSLKAAEGSRKVRNRVGRGTSSGNGKTSGRGQKGQKSRSGGGVRPGFEGGQTEL. Gly residues-rich tracts occupy residues 23–35 and 42–52; these read TSSG…GRGQ and SGGGVRPGFEG.

It belongs to the universal ribosomal protein uL15 family. Part of the 50S ribosomal subunit.

In terms of biological role, binds to the 23S rRNA. In Lactococcus lactis subsp. lactis (strain IL1403) (Streptococcus lactis), this protein is Large ribosomal subunit protein uL15.